A 365-amino-acid polypeptide reads, in one-letter code: 3-dehydroquinate synthase (365 aa).

NAD(+) contacts are provided by residues 75–80 (DAESGK), 109–113 (GAATD), 133–134 (TT), Lys146, and Lys155. Zn(2+) is bound by residues Glu188, His253, and His269.

It belongs to the sugar phosphate cyclases superfamily. Dehydroquinate synthase family. NAD(+) serves as cofactor. The cofactor is Co(2+). It depends on Zn(2+) as a cofactor.

Its subcellular location is the cytoplasm. It catalyses the reaction 7-phospho-2-dehydro-3-deoxy-D-arabino-heptonate = 3-dehydroquinate + phosphate. It functions in the pathway metabolic intermediate biosynthesis; chorismate biosynthesis; chorismate from D-erythrose 4-phosphate and phosphoenolpyruvate: step 2/7. In terms of biological role, catalyzes the conversion of 3-deoxy-D-arabino-heptulosonate 7-phosphate (DAHP) to dehydroquinate (DHQ). The chain is 3-dehydroquinate synthase from Corynebacterium efficiens (strain DSM 44549 / YS-314 / AJ 12310 / JCM 11189 / NBRC 100395).